The chain runs to 201 residues: Probable molybdenum cofactor guanylyltransferase (201 aa).

Residues 6-8 (LAG), Lys18, Asp67, and Asp92 contribute to the GTP site. Position 92 (Asp92) interacts with Mg(2+).

Belongs to the MobA family. Mg(2+) is required as a cofactor.

Its subcellular location is the cytoplasm. The enzyme catalyses Mo-molybdopterin + GTP + H(+) = Mo-molybdopterin guanine dinucleotide + diphosphate. Functionally, transfers a GMP moiety from GTP to Mo-molybdopterin (Mo-MPT) cofactor (Moco or molybdenum cofactor) to form Mo-molybdopterin guanine dinucleotide (Mo-MGD) cofactor. This chain is Probable molybdenum cofactor guanylyltransferase, found in Thermococcus kodakarensis (strain ATCC BAA-918 / JCM 12380 / KOD1) (Pyrococcus kodakaraensis (strain KOD1)).